The primary structure comprises 915 residues: Protein O-mannosyl-transferase TMTC3 (915 aa).

Residues 1 to 8 (MANINLKE) lie on the Cytoplasmic side of the membrane. The chain crosses the membrane as a helical span at residues 9-29 (ITLIVGVVTACYWNSLFCGFV). The Extracellular segment spans residues 30–93 (FDDVSAILDN…LSELKPMSYH (64 aa)). A helical transmembrane segment spans residues 94 to 114 (LLNMIFHAVVSVIFLKVCKLF). Topologically, residues 115-120 (LDNKSS) are cytoplasmic. 2 helical membrane-spanning segments follow: residues 121 to 139 (VIASLLFAVHPIHTEAVTG) and 140 to 158 (VVGRAELLSSIFFLAAFLS). Residues 159-166 (YTRSKGPD) lie on the Cytoplasmic side of the membrane. The helical transmembrane segment at 167-187 (NSIIWTPIALTVFLVAVATLC) threads the bilayer. Residues 188-193 (KEQGIT) are Extracellular-facing. The chain crosses the membrane as a helical span at residues 194–214 (VVGICCVYEVFIAQGYTLPLL). Over 215-231 (CTTAGQFLRGKGSIPFS) the chain is Cytoplasmic. A helical transmembrane segment spans residues 232–252 (MLQTLVKLIVLMFSTLLLVVI). The Extracellular portion of the chain corresponds to 253–317 (RVQVIQSQLP…TIPLIESLLD (65 aa)). Residues 318–338 (IRNLATFTFFCFLGMLGVFSI) traverse the membrane as a helical segment. The Cytoplasmic segment spans residues 339–353 (RYSGDSSKTVLMALC). Residues 354 to 374 (LMALPFIPASNLFFPVGFVVA) form a helical membrane-spanning segment. The Extracellular segment spans residues 375-376 (ER). A helical membrane pass occupies residues 377–397 (VLYVPSMGFCILVAHGWQKIS). The Cytoplasmic segment spans residues 398–404 (TKSVFKK). Residues 405-423 (LSWICLSMVILTHSLKTFH) traverse the membrane as a helical segment. Residues 424–915 (RNWDWESEYT…EEIERILNGE (492 aa)) are Extracellular-facing. TPR repeat units lie at residues 446-479 (AKLWNNVGHALENEKNFERALKYFLQATHVQPDD), 480-513 (IGAHMNVGRTYKNLNRTKEAEESYMMAKSLMPQI), 529-562 (NVYINLANLIRANESRLEEADQLYRQAISMRPDF), 563-596 (KQAYISRGELLLKMNKPLKAKEAYLKALELDRNN), 597-631 (ADLWYNLAIVHIELKEPNEALKKNFNRALELNPKH), 669-702 (ANGYFNLGMLAMDDKKDNEAEIWMKKAIKLQADF), 703-736 (RSALFNLALLYSQTAKELKALPILEELLRYYPDH), 738-771 (KGLILKGDILMNQKKDILGAKKCFERILEMDPSN), and 772-805 (VQGKHNLCVVYFEEKDLLKAERCLLETLALAPHE). Asn-494 carries an N-linked (GlcNAc...) asparagine glycan. The residue at position 503 (Tyr-503) is a Phosphotyrosine. A glycan (N-linked (GlcNAc...) asparagine) is linked at Asn-541. Positions 848–892 (KEIRGESRQTQIVKTSDNKSQSKSNKQLGKNGDEETPHKTTKDIK) are disordered. N-linked (GlcNAc...) asparagine glycosylation is present at Asn-865. Residues 865–874 (NKSQSKSNKQ) show a composition bias toward low complexity. Residues 878-892 (NGDEETPHKTTKDIK) are compositionally biased toward basic and acidic residues.

Belongs to the TMTC family.

Its subcellular location is the membrane. It localises to the endoplasmic reticulum. It catalyses the reaction a di-trans,poly-cis-dolichyl beta-D-mannosyl phosphate + L-seryl-[protein] = 3-O-(alpha-D-mannosyl)-L-seryl-[protein] + a di-trans,poly-cis-dolichyl phosphate + H(+). The enzyme catalyses a di-trans,poly-cis-dolichyl beta-D-mannosyl phosphate + L-threonyl-[protein] = 3-O-(alpha-D-mannosyl)-L-threonyl-[protein] + a di-trans,poly-cis-dolichyl phosphate + H(+). It participates in protein modification; protein glycosylation. Transfers mannosyl residues to the hydroxyl group of serine or threonine residues. The 4 members of the TMTC family are O-mannosyl-transferases dedicated primarily to the cadherin superfamily, each member seems to have a distinct role in decorating the cadherin domains with O-linked mannose glycans at specific regions. Also acts as O-mannosyl-transferase on other proteins such as PDIA3. Involved in the positive regulation of proteasomal protein degradation in the endoplasmic reticulum (ER), and the control of ER stress response. The protein is Protein O-mannosyl-transferase TMTC3 of Homo sapiens (Human).